The primary structure comprises 579 residues: Nuclear receptor coactivator 5 (579 aa).

M1 is modified (N-acetylmethionine). The segment at 1-78 (MNTAPSRPSP…LRDHRDSRSV (78 aa)) is disordered. The segment at 1–158 (MNTAPSRPSP…RDSFDGRGPP (158 aa)) is transcription repression. The residue at position 3 (T3) is a Phosphothreonine. Residues S9, S21, S24, S29, and S34 each carry the phosphoserine modification. 2 stretches are compositionally biased toward basic and acidic residues: residues 11–62 (TRRD…DLRD) and 68–78 (DLRDHRDSRSV). 5 positions are modified to phosphoserine: S96, S116, S126, S143, and S151. The disordered stretch occupies residues 148–173 (YRDSFDGRGPPGPESQSRAKERLKRE). Positions 164-173 (SRAKERLKRE) are enriched in basic and acidic residues. Phosphothreonine is present on T274. The LXXLL motif signature appears at 345–349 (LINLL). Disordered stretches follow at residues 375–428 (MRSS…PTSQ), 444–537 (VTAN…NFDN), and 560–579 (QTTA…QRHY). Position 378 is a phosphoserine (S378). Residue T379 is modified to Phosphothreonine. S381 is modified (phosphoserine). Polar residues predominate over residues 395 to 413 (SGASLKTQPSSQPLQSGQV). Over residues 446-457 (ANSSSASPSVAA) the composition is skewed to low complexity. The transcription activation stretch occupies residues 458-579 (GNTPNQNFST…APMGSYQRHY (122 aa)). Polar residues-rich tracts occupy residues 459–485 (NTPN…NQPP) and 520–537 (SNMT…NFDN).

As to quaternary structure, binds HTATIP2/TIP30. Interacts with YLPM1. Forms a complex with ILF2, ILF3, YLPM1, KHDRBS1, RBMX and PPP1CA. As to expression, widely expressed.

Its subcellular location is the nucleus. Nuclear receptor coregulator that can have both coactivator and corepressor functions. Interacts with nuclear receptors for steroids (ESR1 and ESR2) independently of the steroid binding domain (AF-2) of the ESR receptors, and with the orphan nuclear receptor NR1D2. Involved in the coactivation of nuclear steroid receptors (ER) as well as the corepression of MYC in response to 17-beta-estradiol (E2). This Homo sapiens (Human) protein is Nuclear receptor coactivator 5 (NCOA5).